The chain runs to 316 residues: ATP synthase gamma chain (316 aa).

The protein belongs to the ATPase gamma chain family. As to quaternary structure, F-type ATPases have 2 components, CF(1) - the catalytic core - and CF(0) - the membrane proton channel. CF(1) has five subunits: alpha(3), beta(3), gamma(1), delta(1), epsilon(1). CF(0) has three main subunits: a, b and c.

It is found in the cellular thylakoid membrane. Its function is as follows. Produces ATP from ADP in the presence of a proton gradient across the membrane. The gamma chain is believed to be important in regulating ATPase activity and the flow of protons through the CF(0) complex. In Prochlorococcus marinus (strain AS9601), this protein is ATP synthase gamma chain.